A 498-amino-acid polypeptide reads, in one-letter code: Mitogen-activated protein kinase 15 (498 aa).

The Protein kinase domain occupies 13–304; sequence YKIEEVIGKG…AEEALADPYF (292 aa). ATP-binding positions include 19-27 and Lys-42; that span reads IGKGSYGVV. The Proton acceptor role is filled by Asp-139. Thr-175 carries the post-translational modification Phosphothreonine. Residues 175 to 177 carry the TXY motif; sequence TDY. Tyr-177 bears the Phosphotyrosine mark. Disordered regions lie at residues 388-411 and 470-498; these read STAA…SDDR and STAE…GSYP. Over residues 486 to 498 the composition is skewed to polar residues; the sequence is LATNTVSPRGSYP.

The protein belongs to the protein kinase superfamily. CMGC Ser/Thr protein kinase family. MAP kinase subfamily. Post-translationally, dually phosphorylated on Thr-175 and Tyr-177, which activates the enzyme.

It carries out the reaction L-seryl-[protein] + ATP = O-phospho-L-seryl-[protein] + ADP + H(+). The enzyme catalyses L-threonyl-[protein] + ATP = O-phospho-L-threonyl-[protein] + ADP + H(+). Its activity is regulated as follows. Activated by threonine and tyrosine phosphorylation. This Oryza sativa subsp. japonica (Rice) protein is Mitogen-activated protein kinase 15 (MPK15).